Reading from the N-terminus, the 157-residue chain is 2-C-methyl-D-erythritol 2,4-cyclodiphosphate synthase (157 aa).

A divalent metal cation-binding residues include Asp8 and His10. Residues 8–10 and 34–35 each bind 4-CDP-2-C-methyl-D-erythritol 2-phosphate; these read DVH and HS. Residue His42 participates in a divalent metal cation binding. Residues 56-58, 61-65, 100-106, 132-135, Phe139, and Arg142 each bind 4-CDP-2-C-methyl-D-erythritol 2-phosphate; these read DIG, FPDTD, AQAPKMA, and TTTE.

It belongs to the IspF family. As to quaternary structure, homotrimer. The cofactor is a divalent metal cation.

It catalyses the reaction 4-CDP-2-C-methyl-D-erythritol 2-phosphate = 2-C-methyl-D-erythritol 2,4-cyclic diphosphate + CMP. Its pathway is isoprenoid biosynthesis; isopentenyl diphosphate biosynthesis via DXP pathway; isopentenyl diphosphate from 1-deoxy-D-xylulose 5-phosphate: step 4/6. Functionally, involved in the biosynthesis of isopentenyl diphosphate (IPP) and dimethylallyl diphosphate (DMAPP), two major building blocks of isoprenoid compounds. Catalyzes the conversion of 4-diphosphocytidyl-2-C-methyl-D-erythritol 2-phosphate (CDP-ME2P) to 2-C-methyl-D-erythritol 2,4-cyclodiphosphate (ME-CPP) with a corresponding release of cytidine 5-monophosphate (CMP). In Pseudomonas fluorescens (strain Pf0-1), this protein is 2-C-methyl-D-erythritol 2,4-cyclodiphosphate synthase.